The primary structure comprises 1121 residues: RecBCD enzyme subunit RecC (1121 aa).

The protein belongs to the RecC family. Heterotrimer of RecB, RecC and RecD. All subunits contribute to DNA-binding.

In terms of biological role, a helicase/nuclease that prepares dsDNA breaks (DSB) for recombinational DNA repair. Binds to DSBs and unwinds DNA via a highly rapid and processive ATP-dependent bidirectional helicase activity. Unwinds dsDNA until it encounters a Chi (crossover hotspot instigator) sequence from the 3' direction. Cuts ssDNA a few nucleotides 3' to the Chi site. The properties and activities of the enzyme are changed at Chi. The Chi-altered holoenzyme produces a long 3'-ssDNA overhang and facilitates RecA-binding to the ssDNA for homologous DNA recombination and repair. Holoenzyme degrades any linearized DNA that is unable to undergo homologous recombination. In the holoenzyme this subunit recognizes the wild-type Chi sequence, and when added to isolated RecB increases its ATP-dependent helicase processivity. The chain is RecBCD enzyme subunit RecC from Haemophilus influenzae (strain ATCC 51907 / DSM 11121 / KW20 / Rd).